The primary structure comprises 366 residues: RNA 3'-terminal phosphate cyclase (366 aa).

Residues Gln104, Pro131, Tyr294, Asp297, Gln298, and His320 each coordinate ATP. His320 functions as the Tele-AMP-histidine intermediate in the catalytic mechanism.

It belongs to the RNA 3'-terminal cyclase family. Type 1 subfamily. In terms of tissue distribution, detected in retinal ganglion cells (RGCs) (at protein level).

It is found in the nucleus. Its subcellular location is the nucleoplasm. It carries out the reaction a 3'-end 3'-phospho-ribonucleotide-RNA + ATP = a 3'-end 2',3'-cyclophospho-ribonucleotide-RNA + AMP + diphosphate. Catalyzes the conversion of 3'-phosphate to a 2',3'-cyclic phosphodiester at the end of RNA. The mechanism of action of the enzyme occurs in 3 steps: (A) adenylation of the enzyme by ATP; (B) transfer of adenylate to an RNA-N3'P to produce RNA-N3'PP5'A; (C) and attack of the adjacent 2'-hydroxyl on the 3'-phosphorus in the diester linkage to produce the cyclic end product. Likely functions in some aspects of cellular RNA processing. Function plays an important role in regulating axon regeneration by inhibiting central nervous system (CNS) axon regeneration following optic nerve injury. This Mus musculus (Mouse) protein is RNA 3'-terminal phosphate cyclase.